The chain runs to 198 residues: Superoxide dismutase [Mn], mitochondrial (198 aa).

Position 26 (histidine 26) interacts with Mn(2+). Tyrosine 34 is modified (3'-nitrotyrosine). Lysine 44 and lysine 51 each carry N6-acetyllysine; alternate. An N6-succinyllysine; alternate mark is found at lysine 44 and lysine 51. Residue histidine 74 participates in Mn(2+) binding. Residue lysine 90 is modified to N6-acetyllysine. N6-acetyllysine; alternate is present on residues lysine 98 and lysine 106. N6-succinyllysine; alternate occurs at positions 98 and 106. Positions 159 and 163 each coordinate Mn(2+). Lysine 178 carries the N6-acetyllysine modification.

Belongs to the iron/manganese superoxide dismutase family. In terms of assembly, homotetramer. It depends on Mn(2+) as a cofactor. In terms of processing, nitrated under oxidative stress. Nitration coupled with oxidation inhibits the catalytic activity. Post-translationally, acetylation at Lys-98 decreases enzymatic activity. Deacetylated by SIRT3 upon exposure to ionizing radiations or after long fasting. Polyubiquitinated; leading to proteasomal degradation. Deubiquitinated by USP36 which increases protein stability.

Its subcellular location is the mitochondrion matrix. It carries out the reaction 2 superoxide + 2 H(+) = H2O2 + O2. Its function is as follows. Destroys superoxide anion radicals which are normally produced within the cells and which are toxic to biological systems. This is Superoxide dismutase [Mn], mitochondrial (SOD2) from Macaca fuscata fuscata (Japanese macaque).